The primary structure comprises 1052 residues: MSAILPGYAELHCQSNFSFLQGASHPEELVTRAGELGYAALALTDECSLAGVVRAHVEAREQKLPLIIGSSFTLQAGADAPPLDLTLLAQNREGYGNLAELITLGRGRAAKGQYLLTPADIEAPAGDNAHLRGMPDCLAILAPPPGLAAERLAEQARWLAAQCPGRAWIGLTLLHHCRDDLHRAAVEHAAHASGLPIVALGQAQMHRRSRKPLHDTLAAIRTGRSVGQCGYDLAANAERHLRSRLRLASLYPAQALAQTLAIARRCTFSLDELQYEYPDEIVPAGHTPASYLRQQTYLGARQRFPEGMTPAVAAQVEKELALINELRYEAYFLTVYDIVGYARSQGILCQGRGSAANSAVCYCLGITAVDPARGNTLFERFISKERNEPPDIDVDFEHQRREEVIQYIYEKYGRQRAALTAVVISYRPRSVLRDTGRALGVDNGIIDAVARAHQWWDGKKEMLRSLAACGLDPASRVARQWAELAETLMGFPRHLSQHPGGFVISRGKLSRLVPIENAAMPGRSVVQWDKDDLDALRLLKVDVLALGMLSVLRRALALAGQRRGRPLALHEIPPDDDATYDMICAADTIGVFQIESRAQMSMLPRLRPRQYYDLVVQVAIVRPGPIQGGMVPPYLRRRQGREDITYPGPAVRKALARTLGVPIFQEQVMQIAVDAAGFTPGEADALRRSMAAWRRKGGVDKFRAQLVGGLLARNYTADFAQALFRQIEGFGEYGFPESHAASFALLAYASSWLKCHEPEAFLAALLNSQPMGFYAPAQLVQDARRHGVRVLPADVLYSGWEASLQDAPGAARPAVRLGLNLVKGLREDSARAIEQARVRRPFADTADMARRAGLPRQALDALAAADALRTLAGHRRLASWQAAASAQSRDLLREAVIVETETPALPAPSEGQTVAADYRSVGLTLGRHPLALLRPQLAARNFQTAAVLNTYPNRRLARACGIVTVRQRPQTAKGTIFVTLEDETGPINAVVRPELIERQRRELLDATLLGIYGTWQSVDGVRHLVAQRLVDLSSLLGQLSQDGLAAASRNFH.

It belongs to the DNA polymerase type-C family. DnaE2 subfamily.

It is found in the cytoplasm. The catalysed reaction is DNA(n) + a 2'-deoxyribonucleoside 5'-triphosphate = DNA(n+1) + diphosphate. DNA polymerase involved in damage-induced mutagenesis and translesion synthesis (TLS). It is not the major replicative DNA polymerase. This Bordetella parapertussis (strain 12822 / ATCC BAA-587 / NCTC 13253) protein is Error-prone DNA polymerase.